Reading from the N-terminus, the 110-residue chain is Parvalbumin alpha (110 aa).

Position 2 is an N-acetylserine (Ser2). 2 positions are modified to phosphoserine: Ser2 and Ser24. EF-hand domains follow at residues 39 to 74 (KSAD…FSPD) and 78 to 110 (LSAK…VAES). Ca(2+) is bound by residues Asp52, Asp54, Ser56, Phe58, Glu60, Glu63, Asp91, Asp93, Asp95, Lys97, and Glu102.

In muscle, parvalbumin is thought to be involved in relaxation after contraction. It binds two calcium ions. This chain is Parvalbumin alpha (PVALB), found in Homo sapiens (Human).